The sequence spans 284 residues: 4-diphosphocytidyl-2-C-methyl-D-erythritol kinase (284 aa).

The active site involves lysine 14. 98–108 (PMGGGLGGGSS) contributes to the ATP binding site. The active site involves aspartate 140.

It belongs to the GHMP kinase family. IspE subfamily.

The enzyme catalyses 4-CDP-2-C-methyl-D-erythritol + ATP = 4-CDP-2-C-methyl-D-erythritol 2-phosphate + ADP + H(+). It functions in the pathway isoprenoid biosynthesis; isopentenyl diphosphate biosynthesis via DXP pathway; isopentenyl diphosphate from 1-deoxy-D-xylulose 5-phosphate: step 3/6. Catalyzes the phosphorylation of the position 2 hydroxy group of 4-diphosphocytidyl-2C-methyl-D-erythritol. In Shewanella baltica (strain OS223), this protein is 4-diphosphocytidyl-2-C-methyl-D-erythritol kinase.